Here is a 289-residue protein sequence, read N- to C-terminus: 4-diphosphocytidyl-2-C-methyl-D-erythritol kinase (289 aa).

Residue Lys-10 is part of the active site. 94–104 lines the ATP pocket; the sequence is PVAAGLAGGSS. Asp-136 is a catalytic residue.

Belongs to the GHMP kinase family. IspE subfamily.

It catalyses the reaction 4-CDP-2-C-methyl-D-erythritol + ATP = 4-CDP-2-C-methyl-D-erythritol 2-phosphate + ADP + H(+). The protein operates within isoprenoid biosynthesis; isopentenyl diphosphate biosynthesis via DXP pathway; isopentenyl diphosphate from 1-deoxy-D-xylulose 5-phosphate: step 3/6. Functionally, catalyzes the phosphorylation of the position 2 hydroxy group of 4-diphosphocytidyl-2C-methyl-D-erythritol. In Bacillus mycoides (strain KBAB4) (Bacillus weihenstephanensis), this protein is 4-diphosphocytidyl-2-C-methyl-D-erythritol kinase.